Here is a 141-residue protein sequence, read N- to C-terminus: High mobility group B protein 3 (141 aa).

Composition is skewed to basic and acidic residues over residues 1 to 12 (MKGAKSKAETRS) and 70 to 110 (GGEK…LEEG). Disordered regions lie at residues 1–40 (MKGA…RPSS) and 54–141 (KEEH…EDDD). Residues 35–104 (PKRPSSAFFV…EYEKNMKAYN (70 aa)) constitute a DNA-binding region (HMG box). S122 carries the post-translational modification Phosphoserine. Acidic residues predominate over residues 124–141 (VNDEDDAEDGSEEEEDDD).

Belongs to the HMGB family. As to expression, expressed in lateral roots, root tips, stems, cotyledons, leaves and flowers (excluding ovary and pedicels).

The protein resides in the nucleus. It is found in the cytoplasm. The protein localises to the cytosol. Its function is as follows. Binds preferentially double-stranded DNA. This Arabidopsis thaliana (Mouse-ear cress) protein is High mobility group B protein 3 (HMGB3).